A 159-amino-acid polypeptide reads, in one-letter code: Flagellar assembly factor FliW (159 aa).

The protein belongs to the FliW family. In terms of assembly, interacts with translational regulator CsrA and flagellin(s).

It localises to the cytoplasm. Functionally, acts as an anti-CsrA protein, binds CsrA and prevents it from repressing translation of its target genes, one of which is flagellin. Binds to flagellin and participates in the assembly of the flagellum. The chain is Flagellar assembly factor FliW from Geobacter sulfurreducens (strain ATCC 51573 / DSM 12127 / PCA).